The sequence spans 288 residues: Phenazine biosynthesis-like domain-containing protein 2 (288 aa).

Glutamate 46 is a catalytic residue.

The protein belongs to the PhzF family.

The sequence is that of Phenazine biosynthesis-like domain-containing protein 2 (Pbld2) from Mus musculus (Mouse).